The sequence spans 81 residues: MASEQEILSGLAEIVNEETGLPTDSVLADKSFTDDLDIDSLSMMTIVVNAEEKFSVRIPDEDVKNLRTVGDAVAYISQAQG.

The region spanning 2-80 (ASEQEILSGL…DAVAYISQAQ (79 aa)) is the Carrier domain. Ser40 is subject to O-(pantetheine 4'-phosphoryl)serine.

This sequence belongs to the acyl carrier protein (ACP) family. Post-translationally, 4'-phosphopantetheine is transferred from CoA to a specific serine of apo-ACP by AcpS. This modification is essential for activity because fatty acids are bound in thioester linkage to the sulfhydryl of the prosthetic group.

Its subcellular location is the cytoplasm. Its pathway is lipid metabolism; fatty acid biosynthesis. Its function is as follows. Carrier of the growing fatty acid chain in fatty acid biosynthesis. In Kineococcus radiotolerans (strain ATCC BAA-149 / DSM 14245 / SRS30216), this protein is Acyl carrier protein.